We begin with the raw amino-acid sequence, 390 residues long: Succinate--CoA ligase [ADP-forming] subunit beta (390 aa).

The 237-residue stretch at 9–245 folds into the ATP-grasp domain; it reads KHLLKKYNIP…TTQEDEHETM (237 aa). ATP contacts are provided by residues lysine 46, 53–55, glutamate 99, serine 102, and glutamate 107; that span reads GRG. Residues asparagine 200 and aspartate 214 each coordinate Mg(2+). Substrate-binding positions include asparagine 265 and 322–324; that span reads GIV.

It belongs to the succinate/malate CoA ligase beta subunit family. Heterotetramer of two alpha and two beta subunits. The cofactor is Mg(2+).

The enzyme catalyses succinate + ATP + CoA = succinyl-CoA + ADP + phosphate. It catalyses the reaction GTP + succinate + CoA = succinyl-CoA + GDP + phosphate. It participates in carbohydrate metabolism; tricarboxylic acid cycle; succinate from succinyl-CoA (ligase route): step 1/1. In terms of biological role, succinyl-CoA synthetase functions in the citric acid cycle (TCA), coupling the hydrolysis of succinyl-CoA to the synthesis of either ATP or GTP and thus represents the only step of substrate-level phosphorylation in the TCA. The beta subunit provides nucleotide specificity of the enzyme and binds the substrate succinate, while the binding sites for coenzyme A and phosphate are found in the alpha subunit. This chain is Succinate--CoA ligase [ADP-forming] subunit beta, found in Coxiella burnetii (strain RSA 331 / Henzerling II).